A 132-amino-acid polypeptide reads, in one-letter code: NAD(P)H-quinone oxidoreductase subunit 3 (132 aa).

Transmembrane regions (helical) follow at residues 22-42 (FLGF…ASAL), 76-96 (MFAL…PWAV), and 101-121 (LGLL…VALV).

It belongs to the complex I subunit 3 family. As to quaternary structure, NDH-1 can be composed of about 15 different subunits; different subcomplexes with different compositions have been identified which probably have different functions.

The protein resides in the cellular thylakoid membrane. The catalysed reaction is a plastoquinone + NADH + (n+1) H(+)(in) = a plastoquinol + NAD(+) + n H(+)(out). It catalyses the reaction a plastoquinone + NADPH + (n+1) H(+)(in) = a plastoquinol + NADP(+) + n H(+)(out). Its function is as follows. NDH-1 shuttles electrons from an unknown electron donor, via FMN and iron-sulfur (Fe-S) centers, to quinones in the respiratory and/or the photosynthetic chain. The immediate electron acceptor for the enzyme in this species is believed to be plastoquinone. Couples the redox reaction to proton translocation, and thus conserves the redox energy in a proton gradient. Cyanobacterial NDH-1 also plays a role in inorganic carbon-concentration. In Thermosynechococcus vestitus (strain NIES-2133 / IAM M-273 / BP-1), this protein is NAD(P)H-quinone oxidoreductase subunit 3 (ndhC).